We begin with the raw amino-acid sequence, 505 residues long: ATP synthase subunit alpha (505 aa).

Gly172–Thr179 is a binding site for ATP.

The protein belongs to the ATPase alpha/beta chains family. F-type ATPases have 2 components, CF(1) - the catalytic core - and CF(0) - the membrane proton channel. CF(1) has five subunits: alpha(3), beta(3), gamma(1), delta(1), epsilon(1). CF(0) has three main subunits: a(1), b(2) and c(9-12). The alpha and beta chains form an alternating ring which encloses part of the gamma chain. CF(1) is attached to CF(0) by a central stalk formed by the gamma and epsilon chains, while a peripheral stalk is formed by the delta and b chains.

It localises to the cell inner membrane. It carries out the reaction ATP + H2O + 4 H(+)(in) = ADP + phosphate + 5 H(+)(out). Functionally, produces ATP from ADP in the presence of a proton gradient across the membrane. The alpha chain is a regulatory subunit. The sequence is that of ATP synthase subunit alpha from Syntrophobacter fumaroxidans (strain DSM 10017 / MPOB).